We begin with the raw amino-acid sequence, 560 residues long: Protein DETOXIFICATION 45, chloroplastic (560 aa).

The transit peptide at 1–75 (MESSRVVVGG…QTNPDCGVVK (75 aa)) directs the protein to the chloroplast. The next 12 membrane-spanning stretches (helical) occupy residues 109–129 (LVMLSLPAIAGQAIDPLTLLM), 147–167 (VSMAIFNTISKLFNIPLLSVA), 209–229 (ALVLAIGIGIFEALALSLASG), 250–270 (FLVLRALGAPAYVVSLALQGI), 280–300 (PVYCLGIGNFLAVFLFPLFIY), 308–328 (GAAISSVISQYTVAILMLILL), 353–373 (FVLGRTLSVLVTMTVATSMAA), 389–411 (VWLAVSLLTDALASSGQALIASS), 426–446 (FVLKIGVVTGIALAIVLGMSF), 466–486 (GVLFVAATQPITALAFIFDGL), 495–515 (YAACSMMVVGGISSAFMLYAP), and 523–543 (VWVGLSMFMGLRMVAGFSRLM).

The protein belongs to the multi antimicrobial extrusion (MATE) (TC 2.A.66.1) family. Ubiquitous.

It localises to the plastid. Its subcellular location is the chloroplast membrane. This is Protein DETOXIFICATION 45, chloroplastic from Arabidopsis thaliana (Mouse-ear cress).